The following is a 209-amino-acid chain: dITP/XTP pyrophosphatase (209 aa).

22–27 contacts substrate; that stretch reads SHNQGK. The active-site Proton acceptor is Asp-83. A Mg(2+)-binding site is contributed by Asp-83. Substrate is bound by residues Ser-84, 167 to 170, Lys-190, and 195 to 196; these read FGYD and HR.

This sequence belongs to the HAM1 NTPase family. Homodimer. Requires Mg(2+) as cofactor.

The catalysed reaction is XTP + H2O = XMP + diphosphate + H(+). It carries out the reaction dITP + H2O = dIMP + diphosphate + H(+). It catalyses the reaction ITP + H2O = IMP + diphosphate + H(+). Functionally, pyrophosphatase that catalyzes the hydrolysis of nucleoside triphosphates to their monophosphate derivatives, with a high preference for the non-canonical purine nucleotides XTP (xanthosine triphosphate), dITP (deoxyinosine triphosphate) and ITP. Seems to function as a house-cleaning enzyme that removes non-canonical purine nucleotides from the nucleotide pool, thus preventing their incorporation into DNA/RNA and avoiding chromosomal lesions. The polypeptide is dITP/XTP pyrophosphatase (Zymomonas mobilis subsp. mobilis (strain ATCC 31821 / ZM4 / CP4)).